Here is a 305-residue protein sequence, read N- to C-terminus: Probable aspartoacylase (305 aa).

His13 and Glu16 together coordinate Zn(2+). Residues Arg55 and 62-63 (NR) each bind substrate. Position 105 (His105) interacts with Zn(2+). Substrate is bound by residues Glu163 and Tyr273.

Belongs to the AspA/AstE family. Aspartoacylase subfamily. The cofactor is Zn(2+).

The catalysed reaction is an N-acyl-L-aspartate + H2O = a carboxylate + L-aspartate. This chain is Probable aspartoacylase, found in Prochlorococcus marinus (strain NATL1A).